The sequence spans 88 residues: KTx type I (88 aa).

An N-terminal signal peptide occupies residues 1 to 19; that stretch reads MKTTLVVVVLACIVALTSA. A ShKT domain is found at 54–88; the sequence is CKDVLSEFSCGVLKKDGQCNKADIQAKCKLTCDKC. Disulfide bonds link Cys54-Cys88, Cys63-Cys81, and Cys72-Cys85.

It belongs to the sea anemone type 1 potassium channel toxin family. As to expression, expressed both outside and in acontia, a specialised envenomation structure laden with batteries of venom-containing nematocysts found only in the superfamily Metridioidea.

Its subcellular location is the secreted. The protein resides in the nematocyst. In terms of biological role, inhibits voltage-gated potassium channels (Kv1/KCNA). This Calliactis polypus (Hermit crab anemone) protein is KTx type I.